We begin with the raw amino-acid sequence, 297 residues long: Large ribosomal subunit protein uL18 (297 aa).

N-acetylglycine is present on G2. N6-acetyllysine occurs at positions 5 and 48. S185 is subject to Phosphoserine. Residue K220 is modified to N6-acetyllysine; alternate. Residue K220 forms a Glycyl lysine isopeptide (Lys-Gly) (interchain with G-Cter in SUMO1); alternate linkage. A Glycyl lysine isopeptide (Lys-Gly) (interchain with G-Cter in SUMO2); alternate cross-link involves residue K220. T232 bears the Phosphothreonine mark. Residues Y253–S297 are disordered. Residues K258–R268 are compositionally biased toward basic residues. S272 bears the Phosphoserine mark.

The protein belongs to the universal ribosomal protein uL18 family. In terms of assembly, component of the large ribosomal subunit (LSU). Part of the 5S RNP complex, which is a LSU subcomplex composed of the 5S RNA, RPL5 and RPL11. Component of a hexameric 5S RNP precursor complex, composed of 5S RNA, RRS1, RPF2/BXDC1, RPL5, RPL11 and HEATR3; this complex acts as a precursor for ribosome assembly. Interacts with NVL in an ATP-dependent manner. Interacts with RRP1B. Interacts with IPO5, IPO7 and KPNB1; these interactions may be involved in RPL5 nuclear import for the assembly of ribosomal subunits.

Its subcellular location is the cytoplasm. The protein resides in the nucleus. It is found in the nucleolus. Functionally, component of the ribosome, a large ribonucleoprotein complex responsible for the synthesis of proteins in the cell. The small ribosomal subunit (SSU) binds messenger RNAs (mRNAs) and translates the encoded message by selecting cognate aminoacyl-transfer RNA (tRNA) molecules. The large subunit (LSU) contains the ribosomal catalytic site termed the peptidyl transferase center (PTC), which catalyzes the formation of peptide bonds, thereby polymerizing the amino acids delivered by tRNAs into a polypeptide chain. The nascent polypeptides leave the ribosome through a tunnel in the LSU and interact with protein factors that function in enzymatic processing, targeting, and the membrane insertion of nascent chains at the exit of the ribosomal tunnel. As part of the 5S RNP/5S ribonucleoprotein particle it is an essential component of the LSU, required for its formation and the maturation of rRNAs. It also couples ribosome biogenesis to p53/TP53 activation. As part of the 5S RNP it accumulates in the nucleoplasm and inhibits MDM2, when ribosome biogenesis is perturbed, mediating the stabilization and the activation of TP53. This is Large ribosomal subunit protein uL18 (Rpl5) from Mus musculus (Mouse).